A 49-amino-acid chain; its full sequence is Small, acid-soluble spore protein O (49 aa).

A disordered region spans residues 24–49; it reads GYNEEFSNEPLTEAQRQNNKKRKKNQ.

Belongs to the SspO family.

Its subcellular location is the spore core. This Geobacillus kaustophilus (strain HTA426) protein is Small, acid-soluble spore protein O.